Here is a 90-residue protein sequence, read N- to C-terminus: uncharacterized protein (90 aa).

Positions 1-20 (MEKLFVLVFALALLAFSSDA) are cleaved as a signal peptide.

The protein resides in the secreted. This is an uncharacterized protein from Mus musculus (Mouse).